The chain runs to 429 residues: Enolase (429 aa).

Residue Q168 coordinates (2R)-2-phosphoglycerate. E210 acts as the Proton donor in catalysis. Residues D247, E288, and D315 each contribute to the Mg(2+) site. Residues K340, R369, S370, and K391 each coordinate (2R)-2-phosphoglycerate. K340 serves as the catalytic Proton acceptor.

The protein belongs to the enolase family. Mg(2+) is required as a cofactor.

Its subcellular location is the cytoplasm. The protein localises to the secreted. It localises to the cell surface. The enzyme catalyses (2R)-2-phosphoglycerate = phosphoenolpyruvate + H2O. Its pathway is carbohydrate degradation; glycolysis; pyruvate from D-glyceraldehyde 3-phosphate: step 4/5. Its function is as follows. Catalyzes the reversible conversion of 2-phosphoglycerate (2-PG) into phosphoenolpyruvate (PEP). It is essential for the degradation of carbohydrates via glycolysis. This Trichormus variabilis (strain ATCC 29413 / PCC 7937) (Anabaena variabilis) protein is Enolase.